Reading from the N-terminus, the 349-residue chain is Ribosomal RNA small subunit methyltransferase H (349 aa).

S-adenosyl-L-methionine contacts are provided by residues 34 to 36 (GGH), Asp-54, Phe-81, Asp-102, and Gln-109.

This sequence belongs to the methyltransferase superfamily. RsmH family.

The protein localises to the cytoplasm. It catalyses the reaction cytidine(1402) in 16S rRNA + S-adenosyl-L-methionine = N(4)-methylcytidine(1402) in 16S rRNA + S-adenosyl-L-homocysteine + H(+). Specifically methylates the N4 position of cytidine in position 1402 (C1402) of 16S rRNA. In Dehalococcoides mccartyi (strain ATCC BAA-2266 / KCTC 15142 / 195) (Dehalococcoides ethenogenes (strain 195)), this protein is Ribosomal RNA small subunit methyltransferase H.